A 315-amino-acid chain; its full sequence is Malate dehydrogenase (315 aa).

NAD(+) is bound by residues glycine 10–glycine 15 and aspartate 34. Positions 85 and 91 each coordinate substrate. NAD(+) contacts are provided by residues asparagine 98 and valine 121–asparagine 123. Substrate contacts are provided by asparagine 123 and arginine 154. Histidine 178 (proton acceptor) is an active-site residue.

This sequence belongs to the LDH/MDH superfamily. MDH type 3 family.

It catalyses the reaction (S)-malate + NAD(+) = oxaloacetate + NADH + H(+). Functionally, catalyzes the reversible oxidation of malate to oxaloacetate. The sequence is that of Malate dehydrogenase from Rhodopirellula baltica (strain DSM 10527 / NCIMB 13988 / SH1).